The sequence spans 332 residues: GTP 3',8-cyclase (332 aa).

The region spanning 7–221 is the Radical SAM core domain; the sequence is QYERLHDYVR…FDLCKQAGLD (215 aa). R16 is a GTP binding site. [4Fe-4S] cluster-binding residues include C23 and C27. Y29 contacts S-adenosyl-L-methionine. C30 is a [4Fe-4S] cluster binding site. Position 66 (R66) interacts with GTP. Residue G70 coordinates S-adenosyl-L-methionine. A GTP-binding site is contributed by T97. S121 contacts S-adenosyl-L-methionine. K158 lines the GTP pocket. Residue M192 participates in S-adenosyl-L-methionine binding. 2 residues coordinate [4Fe-4S] cluster: C256 and C259. 261 to 263 lines the GTP pocket; the sequence is RLR. Residue C273 coordinates [4Fe-4S] cluster.

Belongs to the radical SAM superfamily. MoaA family. As to quaternary structure, monomer and homodimer. [4Fe-4S] cluster serves as cofactor.

It carries out the reaction GTP + AH2 + S-adenosyl-L-methionine = (8S)-3',8-cyclo-7,8-dihydroguanosine 5'-triphosphate + 5'-deoxyadenosine + L-methionine + A + H(+). It participates in cofactor biosynthesis; molybdopterin biosynthesis. In terms of biological role, catalyzes the cyclization of GTP to (8S)-3',8-cyclo-7,8-dihydroguanosine 5'-triphosphate. In Limosilactobacillus fermentum (strain NBRC 3956 / LMG 18251) (Lactobacillus fermentum), this protein is GTP 3',8-cyclase.